We begin with the raw amino-acid sequence, 113 residues long: Putative pterin-4-alpha-carbinolamine dehydratase (113 aa).

It belongs to the pterin-4-alpha-carbinolamine dehydratase family.

The enzyme catalyses (4aS,6R)-4a-hydroxy-L-erythro-5,6,7,8-tetrahydrobiopterin = (6R)-L-erythro-6,7-dihydrobiopterin + H2O. The polypeptide is Putative pterin-4-alpha-carbinolamine dehydratase (Nitrosococcus oceani (strain ATCC 19707 / BCRC 17464 / JCM 30415 / NCIMB 11848 / C-107)).